We begin with the raw amino-acid sequence, 196 residues long: MDVTIQHPWFKRALGPFYPSRLFDQFFGEGLFEYDLLPFLSSTISPYYRQSLFRTVLDSGISELMTHMWFVMHQPHAGNPKNNPIKVRSDRDKFVIFLDVKHFSPEDLTVKVLEDFVEIHGKHNERQDDHGYISREFHRRYRLPSNVDQSALSCSLSADGMLTFSGPKVQSGLDAGHSERAIPVSREEKPSSAPSS.

Met1 is subject to N-acetylmethionine. Positions 1-63 (MDVTIQHPWF…RTVLDSGISE (63 aa)) are required for complex formation with BFSP1 and BFSP2. Deamidated glutamine; partial is present on Gln6. Position 45 is a phosphoserine (Ser45). Deamidated glutamine; partial is present on Gln50. Residues 76 to 185 (HAGNPKNNPI…GHSERAIPVS (110 aa)) enclose the sHSP domain. An N6-acetyllysine mark is found at Lys93 and Lys122. His123 serves as a coordination point for Zn(2+). Deamidated asparagine; partial is present on Asn124. 2 residues coordinate Zn(2+): Glu125 and His130. Residue Ser145 is modified to Phosphoserine. Position 146 is a deamidated asparagine; partial (Asn146). The tract at residues 168–196 (KVQSGLDAGHSERAIPVSREEKPSSAPSS) is disordered. Deamidated glutamine; partial is present on Gln170. Residues 176–190 (GHSERAIPVSREEKP) show a composition bias toward basic and acidic residues. His177 is a Zn(2+) binding site. An O-linked (GlcNAc) serine glycan is attached at Ser185.

It belongs to the small heat shock protein (HSP20) family. As to quaternary structure, heteromer composed of three CRYAA and one CRYAB subunits. Inter-subunit bridging via zinc ions enhances stability, which is crucial as there is no protein turn over in the lens. Can also form homodimers and homotetramers (dimers of dimers) which serve as the building blocks of homooligomers. Within homooligomers, the zinc-binding motif is created from residues of 3 different molecules. His-123 and Glu-125 from one molecule are ligands of the zinc ion, and His-130 and His-177 residues from additional molecules complete the site with tetrahedral coordination geometry. Part of a complex required for lens intermediate filament formation composed of BFSP1, BFSP2 and CRYAA. Acetylation at Lys-93 may increase chaperone activity. Post-translationally, undergoes age-dependent proteolytical cleavage at the C-terminus.

Its subcellular location is the cytoplasm. The protein localises to the nucleus. Contributes to the transparency and refractive index of the lens. Acts as a chaperone, preventing aggregation of various proteins under a wide range of stress conditions. Required for the correct formation of lens intermediate filaments as part of a complex composed of BFSP1, BFSP2 and CRYAA. The polypeptide is Alpha-crystallin A chain (CRYAA) (Mesocricetus auratus (Golden hamster)).